Consider the following 75-residue polypeptide: Sperm-specific protein PL-I (75 aa).

Positions 2–74 (GSSGMMSMVA…GSAGWVLVPK (73 aa)) constitute an H15 domain.

This sequence belongs to the histone H1/H5 family. Sperm.

Its subcellular location is the nucleus. It localises to the chromosome. In terms of biological role, linker histones are implicated in chromatin remodeling and/or transcriptional regulation during spermiogenesis, the process of spermatid maturation into spermatozoa. The chain is Sperm-specific protein PL-I from Spisula solidissima (Atlantic surf-clam).